The chain runs to 671 residues: Anti-sigma-I factor RsgI2 (671 aa).

Over 1–57 (MSHYTGIILKLESDRAIVLTDGLDFMELKLKPGMQRGQHVIFDESDLYSAGLITRYK) the chain is Cytoplasmic. The 48-residue stretch at 4–51 (YTGIILKLESDRAIVLTDGLDFMELKLKPGMQRGQHVIFDESDLYSAG) folds into the RsgI N-terminal anti-sigma domain. Residues 58 to 78 (SIIMPFSAFAAAAAVFLVILF) form a helical membrane-spanning segment. Topologically, residues 79–671 (SLRFVSISQE…SGTLYWGIEP (593 aa)) are extracellular. 2 disordered regions span residues 290–323 (TEAQ…IPHT) and 359–505 (PVPV…APTE). Positions 359–379 (PVPVSTPKPVSTPAYSSTPTP) are enriched in low complexity. Positions 380–400 (ESTPVPVSTPKPASTPTPAST) are enriched in pro residues. Residues 401-425 (PKPVSTPTHVSTPKPISTPTSTPRP) show a composition bias toward low complexity. The span at 426-446 (ASTPKPTSTPTPESTPKPTST) shows a compositional bias: pro residues. The segment covering 447–491 (PAPVSTPTSTPIPTYTSTPASTPIPAYTSTPTSIPTLTPATSPAP) has biased composition (low complexity). The span at 492-502 (TSSPTPIPSPA) shows a compositional bias: pro residues. The 164-residue stretch at 508–671 (LLTKIELQAY…SGTLYWGIEP (164 aa)) folds into the CBM3 domain. Residues Thr554, Asp556, Asp637, Ser640, and Asp641 each coordinate Ca(2+).

In terms of assembly, interacts (via RsgI N-terminal anti-sigma domain) with SigI2.

The protein localises to the cell membrane. Anti-sigma factor for SigI2. Negatively regulates SigI2 activity through direct interaction. Binding of the polysaccharide substrate to the extracellular C-terminal sensing domain of RsgI2 may induce a conformational change in its N-terminal cytoplasmic region, leading to the release and activation of SigI2. The sequence is that of Anti-sigma-I factor RsgI2 from Acetivibrio thermocellus (strain ATCC 27405 / DSM 1237 / JCM 9322 / NBRC 103400 / NCIMB 10682 / NRRL B-4536 / VPI 7372) (Clostridium thermocellum).